The following is a 3744-amino-acid chain: SAGA complex/NuA4 acetyltransferase complex subunit TRA1 (3744 aa).

Residue S2 is modified to N-acetylserine. 4 HEAT repeats span residues 2 to 40 (SLTE…LLNS), 46 to 92 (FFLQ…NQTF), 94 to 131 (PYAM…SFKS), and 135 to 172 (DKLD…DLDS). An HEAT region spans residues 2–2598 (SLTEQIEQFA…KPYHTRQISS (2597 aa)). Position 172 is a phosphoserine (S172). A compositionally biased stretch (basic and acidic residues) spans 185–195 (FSKNDEEKDFP). Positions 185-212 (FSKNDEEKDFPSKQSSTEPRFENSTSSN) are disordered. The segment covering 196–212 (SKQSSTEPRFENSTSSN) has biased composition (polar residues). HEAT repeat units follow at residues 247–284 (PEFT…ISTE), 319–357 (QDYV…ILST), and 437–477 (KLLL…RFKT). The segment covering 522-539 (LEPSDDDHLMPQPKKEDI) has biased composition (basic and acidic residues). Residues 522 to 546 (LEPSDDDHLMPQPKKEDINDSPDVE) are disordered. S542 carries the phosphoserine modification. HEAT repeat units follow at residues 588–628 (RTLM…VFSY), 734–771 (PNFA…LSFM), 779–821 (INEV…SIGG), 829–867 (RSIK…TVPV), 870–910 (SVLA…NLTA), 919–958 (PVID…RNRQ), 1074–1112 (NQEN…HFCL), 1188–1225 (SFIP…NVKS), 1283–1320 (KVLE…LTGI), 1369–1408 (TFNE…SEQL), 1435–1472 (NIRI…ENSK), 1476–1512 (ELLQ…LLIA), 1693–1734 (LKLK…RFTE), 1739–1776 (DQNP…SSNK), 1918–1955 (FPIK…VLHE), 2115–2155 (ELGL…LDSE), 2182–2219 (ENLP…AIKA), 2230–2267 (SPGK…FMNF), 2269–2307 (DNIV…ARIT), and 2536–2573 (IISS…SIPK). Residues 2599–3744 (RTNVINMLLD…RTDVNFMPWF (1146 aa)) are head. One can recognise an FAT domain in the interval 2622–3177 (LVKYLAISYN…HFQLRTTKED (556 aa)). The PI3K/PI4K catalytic domain occupies 3374 to 3732 (FLPTVDFVRG…CIGSAVSPRN (359 aa)). A G-loop region spans residues 3380-3386 (FVRGTHS). Residues 3563–3571 (MINNRTPHK) are catalytic loop. The tract at residues 3600 to 3625 (LKNHDLSLPPDSPIFHNNEPVPFRLT) is activation loop. Positions 3712 to 3744 (TPTVTTQFILDCIGSAVSPRNLARTDVNFMPWF) constitute an FATC domain.

It belongs to the PI3/PI4-kinase family. TRA1 subfamily. As to quaternary structure, component of the 1.8 MDa SAGA (Spt-Ada-Gcn5 acetyltransferase) complex, which is composed of 19 subunits TRA1, SPT7, TAF5, NGG1/ADA3, SGF73, SPT20/ADA5, SPT8, TAF12, TAF6, HFI1/ADA1, UBP8, GCN5, ADA2, SPT3, SGF29, TAF10, TAF9, SGF11 and SUS1. The SAGA complex is composed of 4 modules, namely the HAT (histone acetyltransferase) module (GCN5, ADA2, NGG1/ADA3 and SGF29), the DUB (deubiquitinating) module (UBP8, SGF11, SGF73 and SUS1), the core or TAF (TBP-associated factor) module (TAF5, TAF6, TAF9, TAF10 and TAF12), and the Tra1 or SPT (Suppressor of Ty) module (TRA1, HFI1/ADA1, SPT3, SPT7, SPT8 and SPT20/ADA5). The Tra1/SPT module binds activators, the core module recruits TBP (TATA-binding protein), the HAT module contains the histone H3 acetyltransferase GCN5, and the DUB module comprises the histone H2B deubiquitinase UBP8. Also identified in an altered form of SAGA, named SALSA (SAGA altered, Spt8 absent) or SLIK (SAGA-like) complex, which contains a C-terminal truncated form of SPT7 and is missing SPT8. However, it has been shown that the SAGA and SAGA-like SALSA/SLIK transcriptional coactivators are structurally and biochemically equivalent. Component of the NuA4 acetyltransferase complex, which consists of the catalytic subunit ESA1 and the 12 non-catalytic subunits ACT1, ARP4, EAF1/VID21, SWC4/EAF2, EAF3, EAF5, EAF6, EAF7, EPL1, TRA1, YAF9 and YNG2. TRA1 is the scaffold subunit for binding to a variety of transcription activators or transcription factors to recruit NuA4 for targeted gene activation. Identified in the Ada.spt complex with NGG1/ADA3 and SPT7.

The protein resides in the nucleus. Functionally, essential scaffold subunit of the transcription coactivator SAGA complex. SAGA acts as a general cofactor required for essentially all RNA polymerase II transcription. At the promoters, SAGA is required for transcription pre-initiation complex (PIC) recruitment. It influences RNA polymerase II transcriptional activity through different activities such as TBP interaction (via core/TAF module) and promoter selectivity, interaction with transcription activators (via Tra1/SPT module), and chromatin modification through histone acetylation (via HAT module) and deubiquitination (via DUB module). SAGA preferentially acetylates histones H3 (to form H3K9ac, H3K14ac, H3K18ac and H3K23ac) and H2B and deubiquitinates histone H2B. SAGA interacts with DNA via upstream activating sequences (UASs). Also identified in a modified version of SAGA named SALSA or SLIK. The cleavage of SPT7 and the absence of the SPT8 subunit in SLIK neither drive any major conformational differences in its structure compared with SAGA, nor significantly affect HAT, DUB, or DNA-binding activities. Component of the NuA4 histone H4/H2A acetyltransferase involved in transcription and DNA repair. This chain is SAGA complex/NuA4 acetyltransferase complex subunit TRA1, found in Saccharomyces cerevisiae (strain ATCC 204508 / S288c) (Baker's yeast).